Here is a 155-residue protein sequence, read N- to C-terminus: Leader peptidase HopD (155 aa).

It belongs to the peptidase A24 family.

This Escherichia coli protein is Leader peptidase HopD (hopD).